Here is a 507-residue protein sequence, read N- to C-terminus: ATP synthase subunit alpha (507 aa).

G168 to T175 is a binding site for ATP.

It belongs to the ATPase alpha/beta chains family. F-type ATPases have 2 components, CF(1) - the catalytic core - and CF(0) - the membrane proton channel. CF(1) has five subunits: alpha(3), beta(3), gamma(1), delta(1), epsilon(1). CF(0) has three main subunits: a(1), b(2) and c(9-12). The alpha and beta chains form an alternating ring which encloses part of the gamma chain. CF(1) is attached to CF(0) by a central stalk formed by the gamma and epsilon chains, while a peripheral stalk is formed by the delta and b chains.

It is found in the cell membrane. It catalyses the reaction ATP + H2O + 4 H(+)(in) = ADP + phosphate + 5 H(+)(out). Functionally, produces ATP from ADP in the presence of a proton gradient across the membrane. The alpha chain is a regulatory subunit. The protein is ATP synthase subunit alpha of Mesomycoplasma hyopneumoniae (strain J / ATCC 25934 / NCTC 10110) (Mycoplasma hyopneumoniae).